The sequence spans 480 residues: Ribulose bisphosphate carboxylase large chain (480 aa).

The propeptide occupies 1–2 (MS). P3 carries the post-translational modification N-acetylproline. N6,N6,N6-trimethyllysine is present on K14. Substrate contacts are provided by N123 and T173. Catalysis depends on K175, which acts as the Proton acceptor. A substrate-binding site is contributed by K177. Positions 201, 203, and 204 each coordinate Mg(2+). N6-carboxylysine is present on K201. The active-site Proton acceptor is the H294. Residues R295, H327, and S379 each coordinate substrate.

Belongs to the RuBisCO large chain family. Type I subfamily. In terms of assembly, heterohexadecamer of 8 large chains and 8 small chains; disulfide-linked. The disulfide link is formed within the large subunit homodimers. The cofactor is Mg(2+). In terms of processing, the disulfide bond which can form in the large chain dimeric partners within the hexadecamer appears to be associated with oxidative stress and protein turnover.

It is found in the plastid. It localises to the chloroplast. The catalysed reaction is 2 (2R)-3-phosphoglycerate + 2 H(+) = D-ribulose 1,5-bisphosphate + CO2 + H2O. It carries out the reaction D-ribulose 1,5-bisphosphate + O2 = 2-phosphoglycolate + (2R)-3-phosphoglycerate + 2 H(+). In terms of biological role, ruBisCO catalyzes two reactions: the carboxylation of D-ribulose 1,5-bisphosphate, the primary event in carbon dioxide fixation, as well as the oxidative fragmentation of the pentose substrate in the photorespiration process. Both reactions occur simultaneously and in competition at the same active site. This Rivina humilis (Rougeplant) protein is Ribulose bisphosphate carboxylase large chain.